Consider the following 121-residue polypeptide: Large ribosomal subunit protein bL12 (121 aa).

The protein belongs to the bacterial ribosomal protein bL12 family. In terms of assembly, homodimer. Part of the ribosomal stalk of the 50S ribosomal subunit. Forms a multimeric L10(L12)X complex, where L10 forms an elongated spine to which 2 to 4 L12 dimers bind in a sequential fashion. Binds GTP-bound translation factors.

In terms of biological role, forms part of the ribosomal stalk which helps the ribosome interact with GTP-bound translation factors. Is thus essential for accurate translation. The polypeptide is Large ribosomal subunit protein bL12 (Lactobacillus delbrueckii subsp. bulgaricus (strain ATCC BAA-365 / Lb-18)).